The sequence spans 258 residues: Protein STAY-GREEN LIKE, chloroplastic (258 aa).

The protein belongs to the staygreen family. In terms of tissue distribution, strongly expressed in leaves, stems and panicles, and at lower levels in roots and seeds.

In terms of biological role, promotes chlorophyll degradation in leaves. May be involved in LHCI proteins degradation, regulating the balance between LHCI and LHCII. In Oryza sativa subsp. japonica (Rice), this protein is Protein STAY-GREEN LIKE, chloroplastic.